Consider the following 90-residue polypeptide: Acylphosphatase (90 aa).

Residues 5 to 90 form the Acylphosphatase-like domain; that stretch reads CVKASVKGIV…WRHIDGFEIK (86 aa). Active-site residues include Arg20 and Asn38.

The protein belongs to the acylphosphatase family.

The catalysed reaction is an acyl phosphate + H2O = a carboxylate + phosphate + H(+). The polypeptide is Acylphosphatase (acyP) (Photobacterium profundum (strain SS9)).